Reading from the N-terminus, the 242-residue chain is Placenta-expressed transcript 1 protein (242 aa).

Residues 1 to 26 (MAVLRSLLPQLGLFLCLALCFSPALS) form the signal peptide. 3 N-linked (GlcNAc...) asparagine glycosylation sites follow: Asn47, Asn56, and Asn66. Residue Ser223 is the site of GPI-anchor amidated serine attachment. Residues 224-242 (PLAGALHILLVFLISKLLF) constitute a propeptide, removed in mature form.

N-glycosylated. Post-translationally, GPI-anchored. In terms of tissue distribution, present at high level in the dermal sheath cells near the bulge area of the hair follicle and in the differentiated sebocytes of the normal adult skin (at protein level).

Its subcellular location is the apical cell membrane. In terms of biological role, modulates leading keratinocyte migration and cellular adhesion to matrix proteins during a wound-healing response and promotes wound repair. May play a role during trichilemmal differentiation of the hair follicle. The protein is Placenta-expressed transcript 1 protein (PLET1) of Mesocricetus auratus (Golden hamster).